The sequence spans 1192 residues: Leucine-rich repeat receptor protein kinase EMS1 (1192 aa).

A signal peptide spans 1-18 (MAFLTALFLFLFFSFSSS). N-linked (GlcNAc...) asparagine glycosylation is present at Asn-47. LRR repeat units lie at residues 64-87 (LGRV…EISS), 90-112 (NLRE…IWNL), 114-137 (HLQT…SELP), 138-160 (QLLY…FFIS), 163-185 (ALSS…IGKL), 187-209 (NLSN…IGNI), 235-257 (HLAK…FGEL), 259-281 (NLSI…LGNC), 283-304 (SLKS…ELSE), 330-352 (VLDS…IEDC), 354-376 (MLKH…LCGS), 378-400 (SLEA…FDGC), 402-425 (SLGE…WKLP), 426-447 (LMAL…LWKS), 449-471 (NLME…IGNA), 473-496 (SLKR…GKLT), 497-520 (SLSV…GDCT), 521-543 (SLTT…ITAL), 545-567 (QLQC…PSAY), 581-603 (HHGI…LGEC), 605-628 (VLVE…SRLT), 629-651 (NLTI…MGNS), 653-675 (KLQG…FGLL), 677-697 (SLVK…ASLG), 701-723 (ELTH…LSTM), 725-748 (KLVG…GNLT), 749-772 (QLEY…CGLP), and 773-795 (NLEF…GVCQ). N-linked (GlcNAc...) asparagine glycosylation is found at Asn-171, Asn-187, and Asn-208. Asn-259 carries an N-linked (GlcNAc...) asparagine glycan. 2 N-linked (GlcNAc...) asparagine glycosylation sites follow: Asn-414 and Asn-435. Asn-555 carries an N-linked (GlcNAc...) asparagine glycan. Asn-629 carries an N-linked (GlcNAc...) asparagine glycan. N-linked (GlcNAc...) asparagine glycosylation is found at Asn-682, Asn-711, and Asn-746. A helical membrane pass occupies residues 828-848 (WGIAGLMLGFTIIVFVFVFSL). Thr-914 carries the post-translational modification Phosphothreonine. The 276-residue stretch at 917-1192 (FSKKNIIGDG…LDVLKALKEI (276 aa)) folds into the Protein kinase domain. Residues 923-931 (IGDGGFGTV) and Lys-945 each bind ATP. Position 990 is a phosphotyrosine (Tyr-990). The Proton acceptor role is filled by Asp-1043. Tyr-1085 bears the Phosphotyrosine mark.

The protein belongs to the protein kinase superfamily. Ser/Thr protein kinase family. Interacts with TPD1. In terms of processing, autophosphorylates in vitro. In terms of tissue distribution, present in young buds, open flowers and siliques but absent from mature leaves and roots. Strongly expressed in the young organ primordia, and as the anthers and ovules developed, became focused in the microsporangia and in the distal and chalazal regions of the ovule. In cv. Landsberg erecta, only expressed in the anthers of young floral buds.

The protein resides in the cell membrane. The enzyme catalyses L-seryl-[protein] + ATP = O-phospho-L-seryl-[protein] + ADP + H(+). It carries out the reaction L-threonyl-[protein] + ATP = O-phospho-L-threonyl-[protein] + ADP + H(+). Receptor with a serine/threonine-protein kinase activity required for the specification of the correct number of male archesporial initials and for the subsequent specification of tapetal and middle cell layer identities. In seeds, required for enhancing cell size and the rate of embryonic development. The protein is Leucine-rich repeat receptor protein kinase EMS1 of Arabidopsis thaliana (Mouse-ear cress).